The primary structure comprises 898 residues: Coatomer subunit gamma (898 aa).

HEAT repeat units lie at residues 62–99, 170–207, 280–317, 319–352, 353–389, and 392–427; these read TEAT…ISQD, EIVK…HDRL, KEIN…TNPT, VIPC…GNES, NVER…KFPK, and KHLI…NIPE. Residues 592-631 form a disordered region; sequence GKSPFSTGASKKGDSVTGTPKSNNASNNNNNNEESSGPES. Over residues 613-626 the composition is skewed to low complexity; sequence SNNASNNNNNNEES.

Belongs to the COPG family. Oligomeric complex that consists of at least the alpha, beta, beta', gamma, delta, epsilon and zeta subunits.

The protein localises to the cytoplasm. The protein resides in the golgi apparatus membrane. It is found in the cytoplasmic vesicle. It localises to the COPI-coated vesicle membrane. The coatomer is a cytosolic protein complex that binds to dilysine motifs and reversibly associates with Golgi non-clathrin-coated vesicles, which further mediate biosynthetic protein transport from the ER, via the Golgi up to the trans Golgi network. Coatomer complex is required for budding from Golgi membranes, and is essential for the retrograde Golgi-to-ER transport of dilysine-tagged proteins. This chain is Coatomer subunit gamma (copG), found in Dictyostelium discoideum (Social amoeba).